The sequence spans 427 residues: Mitogen-activated protein kinase 8 (427 aa).

Positions 26–321 (YQNLKPIGSG…VDEALQHPYI (296 aa)) constitute a Protein kinase domain. Residues 32 to 40 (IGSGAQGIV) and lysine 55 contribute to the ATP site. Position 116 is an S-nitrosocysteine (cysteine 116). The active-site Proton acceptor is the aspartate 151. The residue at position 183 (threonine 183) is a Phosphothreonine; by MAP2K7. Residues 183–185 (TPY) carry the TXY motif. Residue tyrosine 185 is modified to Phosphotyrosine; by MAP2K4. Phosphoserine is present on residues methionine 301 and serine 377. Residues 371 to 427 (VIRGQPSPLGAAVINGSQHPSSSSSVNDVSSMSTDPTLASDTDSSLEAAAGPLGCCR) form a disordered region. Residues 387 to 403 (SQHPSSSSSVNDVSSMS) are compositionally biased toward low complexity. Residues 404-415 (TDPTLASDTDSS) show a composition bias toward polar residues.

The protein belongs to the protein kinase superfamily. CMGC Ser/Thr protein kinase family. MAP kinase subfamily. In terms of assembly, forms a complex with MAPK8IP1 and ARHGEF28. Found in a complex with SH3RF1, RAC1, MAP3K11/MLK3, MAP2K7/MKK7 and MAPK8IP1/JIP1. Found in a complex with SH3RF1, RAC2, MAP3K7/TAK1, MAP2K7/MKK7, MAPK8IP1/JIP1 and MAPK9/JNK2. Binds to at least four scaffolding proteins, MAPK8IP1/JIP-1, MAPK8IP2/JIP-2, MAPK8IP3/JIP-3/JSAP1 and SPAG9/MAPK8IP4/JIP-4. These proteins also bind other components of the JNK signaling pathway. Interacts with TP53 and WWOX. Interacts with JAMP. Interacts with HSF1 (via D domain and preferentially with hyperphosphorylated form); this interaction occurs under both normal growth conditions and immediately upon heat shock. Interacts (phosphorylated form) with NFE2; the interaction phosphorylates NFE2 in undifferentiated cells. Interacts with NFATC4. Interacts with MECOM; regulates JNK signaling. Interacts with PIN1; this interaction mediates MAPK8 conformational changes leading to the binding of MAPK8 to its substrates. Interacts with GRIPAP1. Interacts with POU5F1; phosphorylates POU5F1 at 'Ser-355'. Interacts with STMN2, STMN3 and STMN4. Interacts with HSF4. Mg(2+) serves as cofactor. Dually phosphorylated on Thr-183 and Tyr-185 by MAP2K7 and MAP2K4, which activates the enzyme. Phosphorylated by TAOK2. May be phosphorylated at Thr-183 and Tyr-185 by MAP3K1/MEKK1. Phosphorylated form is more concentrated at synapses than none-phosphorylated.

It is found in the cytoplasm. The protein resides in the nucleus. It localises to the synapse. The catalysed reaction is L-seryl-[protein] + ATP = O-phospho-L-seryl-[protein] + ADP + H(+). It catalyses the reaction L-threonyl-[protein] + ATP = O-phospho-L-threonyl-[protein] + ADP + H(+). Its activity is regulated as follows. Activated by threonine and tyrosine phosphorylation by either of two dual specificity kinases, MAP2K4 and MAP2K7. MAP2K4 shows a strong preference for Tyr-185 while MAP2K7 phosphorylates Tyr-183 preferentially. Inhibited by dual specificity phosphatases, such as DUSP1. Inhibited by SERPINB3. Functionally, serine/threonine-protein kinase involved in various processes such as cell proliferation, differentiation, migration, transformation and programmed cell death. Extracellular stimuli such as pro-inflammatory cytokines or physical stress stimulate the stress-activated protein kinase/c-Jun N-terminal kinase (SAP/JNK) signaling pathway. In this cascade, two dual specificity kinases MAP2K4/MKK4 and MAP2K7/MKK7 phosphorylate and activate MAPK8/JNK1. In turn, MAPK8/JNK1 phosphorylates a number of transcription factors, primarily components of AP-1 such as JUN, JDP2 and ATF2 and thus regulates AP-1 transcriptional activity. Phosphorylates the replication licensing factor CDT1, inhibiting the interaction between CDT1 and the histone H4 acetylase HBO1 to replication origins. Loss of this interaction abrogates the acetylation required for replication initiation. Promotes stressed cell apoptosis by phosphorylating key regulatory factors including p53/TP53 and Yes-associates protein YAP1. In T-cells, MAPK8 and MAPK9 are required for polarized differentiation of T-helper cells into Th1 cells. Contributes to the survival of erythroid cells by phosphorylating the antagonist of cell death BAD upon EPO stimulation. Mediates starvation-induced BCL2 phosphorylation, BCL2 dissociation from BECN1, and thus activation of autophagy. Phosphorylates STMN2 and hence regulates microtubule dynamics, controlling neurite elongation in cortical neurons. In the developing brain, through its cytoplasmic activity on STMN2, negatively regulates the rate of exit from multipolar stage and of radial migration from the ventricular zone. Phosphorylates several other substrates including heat shock factor protein 4 (HSF4), the deacetylase SIRT1, ELK1, or the E3 ligase ITCH. Phosphorylates the CLOCK-BMAL1 heterodimer and plays a role in the regulation of the circadian clock. Phosphorylates the heat shock transcription factor HSF1, suppressing HSF1-induced transcriptional activity. Phosphorylates POU5F1, which results in the inhibition of POU5F1's transcriptional activity and enhances its proteasomal degradation. Phosphorylates JUND and this phosphorylation is inhibited in the presence of MEN1. In neurons, phosphorylates SYT4 which captures neuronal dense core vesicles at synapses. Phosphorylates EIF4ENIF1/4-ET in response to oxidative stress, promoting P-body assembly. Phosphorylates SIRT6 in response to oxidative stress, stimulating its mono-ADP-ribosyltransferase activity. Phosphorylates NLRP3, promoting assembly of the NLRP3 inflammasome. Phosphorylates ALKBH5 in response to reactive oxygen species (ROS), promoting ALKBH5 sumoylation and inactivation. In terms of biological role, JNK1 isoforms display different binding patterns: beta-1 preferentially binds to c-Jun, whereas alpha-1, alpha-2, and beta-2 have a similar low level of binding to both c-Jun or ATF2. However, there is no correlation between binding and phosphorylation, which is achieved at about the same efficiency by all isoforms. The protein is Mitogen-activated protein kinase 8 (MAPK8) of Homo sapiens (Human).